The following is a 470-amino-acid chain: uncharacterized protein (470 aa).

The HTH gntR-type domain maps to 1-69; sequence MTRYQHLATL…PRSGYFVAQR (69 aa). An N6-(pyridoxal phosphate)lysine modification is found at Lys-313.

The protein in the C-terminal section; belongs to the class-I pyridoxal-phosphate-dependent aminotransferase family.

This is an uncharacterized protein from Escherichia coli (strain K12).